Here is a 450-residue protein sequence, read N- to C-terminus: MTSAQLDFSRIDLRGQAPTTAELRHRLPRGGTDVDSVIPTVAPIVDQVREGGARAALEIGQRFDGVTPDSVRVPAEVIDAAVGTLADDVIAALEEAIKRVRAFHSAIRPEDKQVEVAPGGIVTERFIPVQRVGLYAPGGNAVYPSSVIMNVVPAQEAGVESLVVASPPQEGGWPHPTVLAACKLLGVDEVWAVGGAQAVALLAHGSTAEGGEELEPVDMVTGPGNIFVTAAKRLCRSVVGIDSEAGPTEIAVLADESANAVEIAYDLISQAEHDTMAASVLITDSEKLADEVVAEMNERYHITENSERVAEALSGQQSGVVLVDDIAAGIRAANAYGAEHLEIHTEDAHGVAAQITNAGAIFIGRFSPVPLGDYAAGSNHVLPTSGTARHSSGLSTLTFLKSVHVIDYNEEGLRGVADTVITLSKSEGLPAHGEAISARTSTANTNGTEV.

Positions 135, 197, and 225 each coordinate NAD(+). Substrate is bound by residues threonine 248, glutamine 270, and histidine 273. The Zn(2+) site is built by glutamine 270 and histidine 273. Active-site proton acceptor residues include glutamate 339 and histidine 340. Substrate-binding residues include histidine 340, aspartate 373, glutamate 427, and histidine 432. Position 373 (aspartate 373) interacts with Zn(2+). Histidine 432 contributes to the Zn(2+) binding site.

This sequence belongs to the histidinol dehydrogenase family. The cofactor is Zn(2+).

The enzyme catalyses L-histidinol + 2 NAD(+) + H2O = L-histidine + 2 NADH + 3 H(+). Its pathway is amino-acid biosynthesis; L-histidine biosynthesis; L-histidine from 5-phospho-alpha-D-ribose 1-diphosphate: step 9/9. Functionally, catalyzes the sequential NAD-dependent oxidations of L-histidinol to L-histidinaldehyde and then to L-histidine. This Corynebacterium jeikeium (strain K411) protein is Histidinol dehydrogenase.